The primary structure comprises 312 residues: Glycerol-3-phosphate dehydrogenase [NAD(P)+] (312 aa).

Positions 11, 30, 31, and 95 each coordinate NADPH. 3 residues coordinate sn-glycerol 3-phosphate: Lys-95, Gly-123, and Ser-125. Ala-127 contributes to the NADPH binding site. Residues Lys-177, Asp-230, Ser-240, Arg-241, and Asn-242 each contribute to the sn-glycerol 3-phosphate site. Lys-177 serves as the catalytic Proton acceptor. Position 241 (Arg-241) interacts with NADPH. NADPH-binding residues include Val-265 and Glu-267.

It belongs to the NAD-dependent glycerol-3-phosphate dehydrogenase family.

The protein localises to the cytoplasm. The catalysed reaction is sn-glycerol 3-phosphate + NAD(+) = dihydroxyacetone phosphate + NADH + H(+). The enzyme catalyses sn-glycerol 3-phosphate + NADP(+) = dihydroxyacetone phosphate + NADPH + H(+). It participates in membrane lipid metabolism; glycerophospholipid metabolism. Its function is as follows. Catalyzes the reduction of the glycolytic intermediate dihydroxyacetone phosphate (DHAP) to sn-glycerol 3-phosphate (G3P), the key precursor for phospholipid synthesis. The chain is Glycerol-3-phosphate dehydrogenase [NAD(P)+] from Helicobacter pylori (strain P12).